The chain runs to 571 residues: Glutamine--tRNA ligase (571 aa).

A 'HIGH' region motif is present at residues 35–45 (PEPNGYLHIGH). ATP is bound by residues 36-38 (EPN) and 42-48 (HIGHAKS). The L-glutamine site is built by D68 and Y213. ATP-binding positions include T232, 262–263 (RL), and 270–272 (LSK). Residues 269–273 (ILSKR) carry the 'KMSKS' region motif.

This sequence belongs to the class-I aminoacyl-tRNA synthetase family. In terms of assembly, monomer.

The protein localises to the cytoplasm. It catalyses the reaction tRNA(Gln) + L-glutamine + ATP = L-glutaminyl-tRNA(Gln) + AMP + diphosphate. The protein is Glutamine--tRNA ligase of Buchnera aphidicola subsp. Acyrthosiphon pisum (strain Tuc7).